Reading from the N-terminus, the 534-residue chain is uncharacterized protein (534 aa).

Helical transmembrane passes span 149 to 169 (ILTT…SITI) and 185 to 205 (VFLV…SLIF).

Its subcellular location is the cell membrane. This is an uncharacterized protein from Mycoplasma pneumoniae (strain ATCC 29342 / M129 / Subtype 1) (Mycoplasmoides pneumoniae).